The primary structure comprises 543 residues: CTP synthase (543 aa).

The amidoligase domain stretch occupies residues 1–265 (MTRFIFVTGG…DQIVLDKFGL (265 aa)). Serine 13 contributes to the CTP binding site. Position 13 (serine 13) interacts with UTP. Residues 14–19 (SLGKGI) and aspartate 71 each bind ATP. Mg(2+)-binding residues include aspartate 71 and glutamate 139. Residues 146-148 (DIE), 186-191 (KTKPTQ), and lysine 222 contribute to the CTP site. UTP is bound by residues 186-191 (KTKPTQ) and lysine 222. Residues 290–541 (TIAMVGKYMD…IQAAVEQNER (252 aa)) form the Glutamine amidotransferase type-1 domain. Glycine 351 serves as a coordination point for L-glutamine. Cysteine 378 (nucleophile; for glutamine hydrolysis) is an active-site residue. Residues 379–382 (LGMQ), glutamate 402, and arginine 469 contribute to the L-glutamine site. Catalysis depends on residues histidine 514 and glutamate 516.

Belongs to the CTP synthase family. Homotetramer.

It carries out the reaction UTP + L-glutamine + ATP + H2O = CTP + L-glutamate + ADP + phosphate + 2 H(+). The catalysed reaction is L-glutamine + H2O = L-glutamate + NH4(+). The enzyme catalyses UTP + NH4(+) + ATP = CTP + ADP + phosphate + 2 H(+). Its pathway is pyrimidine metabolism; CTP biosynthesis via de novo pathway; CTP from UDP: step 2/2. Its activity is regulated as follows. Allosterically activated by GTP, when glutamine is the substrate; GTP has no effect on the reaction when ammonia is the substrate. The allosteric effector GTP functions by stabilizing the protein conformation that binds the tetrahedral intermediate(s) formed during glutamine hydrolysis. Inhibited by the product CTP, via allosteric rather than competitive inhibition. Catalyzes the ATP-dependent amination of UTP to CTP with either L-glutamine or ammonia as the source of nitrogen. Regulates intracellular CTP levels through interactions with the four ribonucleotide triphosphates. This Saccharophagus degradans (strain 2-40 / ATCC 43961 / DSM 17024) protein is CTP synthase.